The following is a 601-amino-acid chain: Proline--tRNA ligase (601 aa).

It belongs to the class-II aminoacyl-tRNA synthetase family. ProS type 1 subfamily. As to quaternary structure, homodimer.

It localises to the cytoplasm. The enzyme catalyses tRNA(Pro) + L-proline + ATP = L-prolyl-tRNA(Pro) + AMP + diphosphate. In terms of biological role, catalyzes the attachment of proline to tRNA(Pro) in a two-step reaction: proline is first activated by ATP to form Pro-AMP and then transferred to the acceptor end of tRNA(Pro). As ProRS can inadvertently accommodate and process non-cognate amino acids such as alanine and cysteine, to avoid such errors it has two additional distinct editing activities against alanine. One activity is designated as 'pretransfer' editing and involves the tRNA(Pro)-independent hydrolysis of activated Ala-AMP. The other activity is designated 'posttransfer' editing and involves deacylation of mischarged Ala-tRNA(Pro). The misacylated Cys-tRNA(Pro) is not edited by ProRS. This chain is Proline--tRNA ligase, found in Tropheryma whipplei (strain TW08/27) (Whipple's bacillus).